A 480-amino-acid chain; its full sequence is UDP-N-acetylmuramoyl-L-alanyl-D-glutamate--2,6-diaminopimelate ligase (480 aa).

Ser-21 contributes to the UDP-N-acetyl-alpha-D-muramoyl-L-alanyl-D-glutamate binding site. 98–104 contributes to the ATP binding site; the sequence is GTNGKSS. Residues 144–145, Ser-171, Gln-177, and Arg-179 contribute to the UDP-N-acetyl-alpha-D-muramoyl-L-alanyl-D-glutamate site; that span reads TT. Lys-211 bears the N6-carboxylysine mark. Meso-2,6-diaminopimelate is bound by residues Arg-372, 396 to 399, Gly-446, and Glu-450; that span reads DNPR. The Meso-diaminopimelate recognition motif motif lies at 396-399; sequence DNPR.

It belongs to the MurCDEF family. MurE subfamily. Mg(2+) serves as cofactor. Post-translationally, carboxylation is probably crucial for Mg(2+) binding and, consequently, for the gamma-phosphate positioning of ATP.

Its subcellular location is the cytoplasm. The enzyme catalyses UDP-N-acetyl-alpha-D-muramoyl-L-alanyl-D-glutamate + meso-2,6-diaminopimelate + ATP = UDP-N-acetyl-alpha-D-muramoyl-L-alanyl-gamma-D-glutamyl-meso-2,6-diaminopimelate + ADP + phosphate + H(+). It functions in the pathway cell wall biogenesis; peptidoglycan biosynthesis. In terms of biological role, catalyzes the addition of meso-diaminopimelic acid to the nucleotide precursor UDP-N-acetylmuramoyl-L-alanyl-D-glutamate (UMAG) in the biosynthesis of bacterial cell-wall peptidoglycan. This chain is UDP-N-acetylmuramoyl-L-alanyl-D-glutamate--2,6-diaminopimelate ligase, found in Rickettsia prowazekii (strain Madrid E).